We begin with the raw amino-acid sequence, 211 residues long: Small ribosomal subunit protein uS5 (211 aa).

Positions 50–113 (LEDEVLDINM…DNAKINITRI (64 aa)) constitute an S5 DRBM domain.

It belongs to the universal ribosomal protein uS5 family. Part of the 30S ribosomal subunit. Contacts protein S4.

With S4 and S12 plays an important role in translational accuracy. The sequence is that of Small ribosomal subunit protein uS5 from Methanococcoides burtonii (strain DSM 6242 / NBRC 107633 / OCM 468 / ACE-M).